The sequence spans 469 residues: GTPase Der (469 aa).

EngA-type G domains lie at 30–193 (PVLA…PEVA) and 203–376 (RRVA…ASWD). GTP-binding positions include 36–43 (GRPNVGKS), 83–87 (DTGGW), 145–148 (NKVD), 209–216 (GKPNVGKS), 256–260 (DTAGL), and 321–324 (NKWD). The KH-like domain occupies 377-459 (TRIPTGPLNS…PIRINVRVRE (83 aa)).

This sequence belongs to the TRAFAC class TrmE-Era-EngA-EngB-Septin-like GTPase superfamily. EngA (Der) GTPase family. In terms of assembly, associates with the 50S ribosomal subunit.

GTPase that plays an essential role in the late steps of ribosome biogenesis. The chain is GTPase Der from Mycobacterium marinum (strain ATCC BAA-535 / M).